Reading from the N-terminus, the 151-residue chain is Probable cGMP 3',5'-cyclic phosphodiesterase subunit delta (151 aa).

This sequence belongs to the PDE6D/unc-119 family. As to quaternary structure, interacts with Pde6.

Its subcellular location is the nucleus. It is found in the cytoplasm. The sequence is that of Probable cGMP 3',5'-cyclic phosphodiesterase subunit delta from Drosophila sechellia (Fruit fly).